Here is a 61-residue protein sequence, read N- to C-terminus: ERMES regulator 1 (61 aa).

Over 1–20 the chain is Mitochondrial intermembrane; it reads MLPNLRRIFASFRTEEEERS. A helical membrane pass occupies residues 21–43; that stretch reads YSRKAFFHLIGYITCSVLFSWLV. Residues 44 to 61 lie on the Cytoplasmic side of the membrane; sequence RKKVISSPVVSSPIHALS.

The protein belongs to the EMR1 family. In terms of assembly, interacts with the ER-mitochondria encounter structure (ERMES) complex. Interacts with mdm12. Interacts with mdm34.

It is found in the mitochondrion outer membrane. Mediates the formation of endoplasmic reticulum (ER)-mitochondria encounter structure (ERMES) foci, thereby contributing to the formation of ER-mitochondrial contact sites. This is ERMES regulator 1 from Schizosaccharomyces pombe (strain 972 / ATCC 24843) (Fission yeast).